Reading from the N-terminus, the 83-residue chain is RNA-binding protein Hfq (83 aa).

The Sm domain occupies 9 to 69 (DQLLNTARKE…ISTIIPAKPI (61 aa)).

Belongs to the Hfq family. Homohexamer.

RNA chaperone that binds small regulatory RNA (sRNAs) and mRNAs to facilitate mRNA translational regulation in response to envelope stress, environmental stress and changes in metabolite concentrations. Also binds with high specificity to tRNAs. The polypeptide is RNA-binding protein Hfq (Leptospira biflexa serovar Patoc (strain Patoc 1 / Ames)).